Consider the following 526-residue polypeptide: Arylsulfatase G (526 aa).

A signal peptide spans 1–16; sequence MGWLFLKVLLVGMVFS. Ca(2+) is bound by residues Asp-44, Asp-45, and Cys-84. The Nucleophile role is filled by Cys-84. 3-oxoalanine (Cys) is present on Cys-84. A glycan (N-linked (GlcNAc...) asparagine) is linked at Asn-117. Lys-137 is a binding site for substrate. His-139 is a catalytic residue. Substrate is bound at residue Ser-162. The N-linked (GlcNAc...) asparagine glycan is linked to Asn-215. Residue His-251 coordinates substrate. Ca(2+) contacts are provided by Asp-302 and Asn-303. N-linked (GlcNAc...) asparagine glycosylation is found at Asn-356 and Asn-497.

Belongs to the sulfatase family. Ca(2+) serves as cofactor. In terms of processing, N-glycosylated with both high mannose and complex type sugars. The conversion to 3-oxoalanine (also known as C-formylglycine, FGly), of a serine or cysteine residue in prokaryotes and of a cysteine residue in eukaryotes, is critical for catalytic activity. Post-translationally, 63-kDa precursor undergoes proteolytic processing in two steps, yielding two fragments in the first step (apparent molecular masses of 44 and 18 kDa). In the second step, the 44-kDa fragment is processed further to the 34- and 10-kDa chains. The 10-kDa chain is a cleavage product of the 44-kDa fragment but linked to the 18-kDa chain through a disulfide bridge.

The protein resides in the lysosome. The enzyme catalyses an aryl sulfate + H2O = a phenol + sulfate + H(+). The catalysed reaction is Hydrolysis of the 3-sulfate groups of the N-sulfo-D-glucosamine 3-O-sulfate units of heparin.. Displays arylsulfatase activity at acidic pH towards the artificial substrate p-nitrocatechol sulfate. Catalyzes the hydrolysis of the 3-sulfate groups of the N-sulfo-D-glucosamine 3-O-sulfate units of heparin. In Rattus norvegicus (Rat), this protein is Arylsulfatase G (Arsg).